Here is a 60-residue protein sequence, read N- to C-terminus: Large ribosomal subunit protein uL30 (60 aa).

This sequence belongs to the universal ribosomal protein uL30 family. Part of the 50S ribosomal subunit.

This Shewanella denitrificans (strain OS217 / ATCC BAA-1090 / DSM 15013) protein is Large ribosomal subunit protein uL30.